The chain runs to 182 residues: DNA-directed RNA polymerase 30 kDa polypeptide (182 aa).

A TFIIS-type zinc finger spans residues 135-175 (STIRCVACKSNNTIPMILQTRSSDEEPTVRVVCKDCGKNFA). Zn(2+) is bound by residues Cys139, Cys142, Cys167, and Cys170.

This sequence belongs to the poxviridae DNA-directed RNA polymerase 30 kDa subunit family. In terms of assembly, this enzyme consists of at least eight subunits.

The enzyme catalyses RNA(n) + a ribonucleoside 5'-triphosphate = RNA(n+1) + diphosphate. In terms of biological role, DNA-dependent RNA polymerase catalyzes the transcription of DNA into RNA using the four ribonucleoside triphosphates as substrates. Rpo30 may have a role in RNA chain elongation. This chain is DNA-directed RNA polymerase 30 kDa polypeptide (RPO30), found in Fowlpox virus (strain NVSL) (FPV).